Consider the following 316-residue polypeptide: Probable cell division protein WhiA (316 aa).

Residues 275–309 (TLKELGEMVASGKISKSGINHRLRKLDEIAEQLRT) constitute a DNA-binding region (H-T-H motif).

It belongs to the WhiA family.

Involved in cell division and chromosome segregation. This is Probable cell division protein WhiA from Bacillus velezensis (strain DSM 23117 / BGSC 10A6 / LMG 26770 / FZB42) (Bacillus amyloliquefaciens subsp. plantarum).